The sequence spans 224 residues: UPF0758 protein SPO0054 (224 aa).

The MPN domain maps to 102 to 224 (VISSWDALLD…ELSFRAEGYL (123 aa)). Zn(2+) is bound by residues His173, His175, and Asp186. The short motif at 173–186 (HNHPSGDPTPSQSD) is the JAMM motif element.

This sequence belongs to the UPF0758 family.

The polypeptide is UPF0758 protein SPO0054 (Ruegeria pomeroyi (strain ATCC 700808 / DSM 15171 / DSS-3) (Silicibacter pomeroyi)).